Reading from the N-terminus, the 135-residue chain is Large ribosomal subunit protein uL16c (135 aa).

Belongs to the universal ribosomal protein uL16 family. In terms of assembly, part of the 50S ribosomal subunit.

Its subcellular location is the plastid. It localises to the chloroplast. The protein is Large ribosomal subunit protein uL16c of Gossypium barbadense (Sea Island cotton).